Consider the following 3110-residue polypeptide: Huntingtin (3110 aa).

The segment at 1–58 is disordered; the sequence is MKAFESLKSFQQQQQQQQPPPQPPPPPPPPPQPPQPPPQGQPPPPPPLPGPAEEPLHR. N6-acetyllysine is present on lysine 2. Residues 18–52 are compositionally biased toward pro residues; the sequence is QPPPQPPPPPPPPPQPPQPPPQGQPPPPPPLPGPA. An N6-acetyllysine mark is found at lysine 146 and lysine 204. 2 HEAT repeats span residues 174–211 and 216–253; these read PYLV…SFGN and NEIK…HSRR. Lysine 313 carries the N6-acetyllysine modification. Serine 387, serine 389, and serine 402 each carry phosphoserine. Lysine 412 is modified (N6-acetyllysine). Residues 462–473 form an interaction with ZDHHC17 region; it reads GHDIITEQPRSQ. Residues 487 to 549 are disordered; it reads DLTSAATDGD…PDSAVTPSDS (63 aa). A compositionally biased stretch (polar residues) spans 521–549; it reads DGTQASSPISDSSQTTTEGPDSAVTPSDS. A lipid anchor (N-myristoyl glycine) is attached at glycine 522. Serine 611 and serine 614 each carry phosphoserine. HEAT repeat units follow at residues 773-810 and 873-911; these read FSLV…SLCS and KLQE…KLFY. A disordered region spans residues 1137-1195; the sequence is KAALPSLTNPPSLSPIRRKGKEKEPGEQTSTPMSPKKGGEASTASRQSDTSGPVTASKS. Over residues 1140–1151 the composition is skewed to low complexity; sequence LPSLTNPPSLSP. Residues serine 1150 and serine 1170 each carry the phosphoserine; by CDK5 modification. The span at 1178-1195 shows a compositional bias: polar residues; that stretch reads STASRQSDTSGPVTASKS. The HEAT 5 repeat unit spans residues 1395-1432; the sequence is LFEPLVIKALKQYTTTTSVQLQKQVLDLLAQLVQLRVN. Serine 1845 carries the post-translational modification Phosphoserine. Residues 2363–2372 carry the Nuclear export signal motif; sequence IVVSLARLPL. The segment at 2601-2628 is disordered; that stretch reads EEEWDEEEEEEADAPAPTSPPVSPVNSR. The segment covering 2602-2613 has biased composition (acidic residues); that stretch reads EEWDEEEEEEAD.

Belongs to the huntingtin family. As to quaternary structure, interacts with PFN1. Interacts through its N-terminus with PRPF40A. Interacts with PQBP1. Interacts with SETD2. Interacts with SH3GLB1. Interacts with SYVN. Interacts with TPR; the interaction is inhibited by forms of Huntingtin with expanded polyglutamine stretch. Interacts with ZDHHC13 (via ANK repeats). Interacts with ZDHHC17 (via ANK repeats). Interacts with F8A1/F8A2/F8A3. Found in a complex with F8A1/F8A2/F8A3, HTT and RAB5A; mediates the recruitment of HTT by RAB5A. Post-translationally, phosphorylation at Ser-1150 and Ser-1170 by CDK5 in response to DNA damage in nuclei of neurons protects neurons against polyglutamine expansion as well as DNA damage mediated toxicity. In terms of processing, cleaved by caspases downstream of the polyglutamine stretch. Myristoylated at Gly-522, following proteolytic cleavage at Asp-521. As to expression, expressed to a high degree in all the regions of the brain of adults and in meiotic cells of the testis. In addition, very low levels are detected in various non-neuronal tissues (heart, muscle, liver, lung and kidney).

The protein localises to the cytoplasm. The protein resides in the nucleus. It is found in the cytoplasmic vesicle. It localises to the autophagosome. In terms of biological role, may play a role in microtubule-mediated transport or vesicle function. Its function is as follows. Promotes the formation of autophagic vesicles. This chain is Huntingtin (Htt), found in Rattus norvegicus (Rat).